Reading from the N-terminus, the 175-residue chain is Ribosome maturation factor RimM (175 aa).

Positions 95–175 (SEDEFYWREL…RIEVDWDPGF (81 aa)) constitute a PRC barrel domain.

Belongs to the RimM family. In terms of assembly, binds ribosomal protein uS19.

It is found in the cytoplasm. An accessory protein needed during the final step in the assembly of 30S ribosomal subunit, possibly for assembly of the head region. Essential for efficient processing of 16S rRNA. May be needed both before and after RbfA during the maturation of 16S rRNA. It has affinity for free ribosomal 30S subunits but not for 70S ribosomes. This is Ribosome maturation factor RimM from Aliivibrio fischeri (strain MJ11) (Vibrio fischeri).